The following is a 201-amino-acid chain: Putative manganese efflux pump MntP 2 (201 aa).

The next 6 membrane-spanning stretches (helical) occupy residues 3 to 23 (LISV…VSIT), 39 to 59 (IGLF…SIGI), 65 to 85 (IAAL…GKMI), 116 to 136 (LILL…SFAF), 141 to 161 (IINT…IGVM), and 176 to 196 (ILGG…HTNI).

Belongs to the MntP (TC 9.B.29) family.

It localises to the cell membrane. Its function is as follows. Probably functions as a manganese efflux pump. The protein is Putative manganese efflux pump MntP 2 of Clostridium botulinum (strain Hall / ATCC 3502 / NCTC 13319 / Type A).